We begin with the raw amino-acid sequence, 361 residues long: uncharacterized protein (361 aa).

An N-terminal signal peptide occupies residues 1–19; that stretch reads MNLVICVLLLSIWKNNCMT. Residues 20-47 lie on the Extracellular side of the membrane; that stretch reads TNQTNGSSTTGDKPVESMQTKLNYLRRN. N-linked (GlcNAc...) asparagine glycosylation occurs at N24. Residues 48–68 form a helical membrane-spanning segment; that stretch reads LLILVGIIIMVFVFICFCYLH. The Cytoplasmic portion of the chain corresponds to 69–361; the sequence is YNCLSDDASK…QVTSEVTLND (293 aa). Positions 99 to 113 are enriched in polar residues; that stretch reads AKTASQCSPETQPML. 3 disordered regions span residues 99-184, 209-247, and 295-316; these read AKTA…KAHK, PPQL…NPKR, and QNLH…LDSR. The segment covering 114 to 133 has biased composition (low complexity); sequence STADKSSDSSSPERASAQSS. A compositionally biased stretch (polar residues) spans 141–150; that stretch reads SSLQKPSIPN. A compositionally biased stretch (low complexity) spans 299–308; it reads VSSKVKSSSR.

It is found in the membrane. This is an uncharacterized protein from Homo sapiens (Human).